Here is a 382-residue protein sequence, read N- to C-terminus: Ribosomal RNA large subunit methyltransferase G (382 aa).

Belongs to the methyltransferase superfamily. RlmG family.

It is found in the cytoplasm. It catalyses the reaction guanosine(1835) in 23S rRNA + S-adenosyl-L-methionine = N(2)-methylguanosine(1835) in 23S rRNA + S-adenosyl-L-homocysteine + H(+). In terms of biological role, specifically methylates the guanine in position 1835 (m2G1835) of 23S rRNA. The polypeptide is Ribosomal RNA large subunit methyltransferase G (Pseudoalteromonas translucida (strain TAC 125)).